The following is a 739-amino-acid chain: Catalase-peroxidase 2 (739 aa).

The N-terminal stretch at 1-26 (MKKTTIPTLSALTLAMSLAFGGAAIA) is a signal peptide. The segment at residues 105-227 (WHSAGVYRIF…MGATQMGLIY (123 aa)) is a cross-link (tryptophyl-tyrosyl-methioninium (Trp-Tyr) (with M-253)). Residue His106 is the Proton acceptor of the active site. The segment at residues 227-253 (YVNPEGPNGVPDPLASAKEIRDTFGRM) is a cross-link (tryptophyl-tyrosyl-methioninium (Tyr-Met) (with W-105)). His268 contacts heme b.

This sequence belongs to the peroxidase family. Peroxidase/catalase subfamily. In terms of assembly, homodimer or homotetramer. It depends on heme b as a cofactor. In terms of processing, formation of the three residue Trp-Tyr-Met cross-link is important for the catalase, but not the peroxidase activity of the enzyme.

It carries out the reaction H2O2 + AH2 = A + 2 H2O. The catalysed reaction is 2 H2O2 = O2 + 2 H2O. Bifunctional enzyme with both catalase and broad-spectrum peroxidase activity. This Shewanella sp. (strain MR-4) protein is Catalase-peroxidase 2.